The chain runs to 254 residues: Emerin (254 aa).

N-acetylmethionine is present on Met1. The LEM domain maps to 1 to 45; sequence MDNYADLSDTELTTLLRRYNIPHGPVVGSTRRLYEKKIFEYETQR. Ser8 and Ser29 each carry phosphoserine. The interval 46 to 222 is interaction with F-actin; that stretch reads RRLSPPSSSA…PGAGLGQDRQ (177 aa). Ser49 carries the phosphoserine; by PKA modification. Phosphoserine occurs at positions 54, 60, 87, 98, 141, 142, and 143. Tyr161 carries the phosphotyrosine modification. The interval 168-186 is interaction with CTNNB1; sequence RPVSASRSSLDLSYYPTSS. Phosphoserine occurs at positions 171, 173, and 175. A helical membrane pass occupies residues 223–243; the sequence is VPLWGQLLLFLVFVIVLFFIY.

As to quaternary structure, interacts with lamins A and C, BANF1, GMCL, BCLAF1 and YTHDC1/YT521. Interacts with TMEM43; the interaction retains emerin in the nuclear inner membrane. Interacts with SUN1 and SUN2. Interacts with ACTB, SPTAN1, F-actin, CTNNB1 and beta-tubulin. Interacts with TMEM201. Interacts with NEMP1. Found in four different phosphorylated forms, three of which appear to be associated with the cell cycle. In terms of tissue distribution, skeletal muscle, heart, colon, testis, ovary and pancreas.

The protein resides in the nucleus inner membrane. Its subcellular location is the nucleus outer membrane. Stabilizes and promotes the formation of a nuclear actin cortical network. Stimulates actin polymerization in vitro by binding and stabilizing the pointed end of growing filaments. Inhibits beta-catenin activity by preventing its accumulation in the nucleus. Acts by influencing the nuclear accumulation of beta-catenin through a CRM1-dependent export pathway. Links centrosomes to the nuclear envelope via a microtubule association. Required for proper localization of non-farnesylated prelamin-A/C. Together with NEMP1, contributes to nuclear envelope stiffness in germ cells. EMD and BAF are cooperative cofactors of HIV-1 infection. Association of EMD with the viral DNA requires the presence of BAF and viral integrase. The association of viral DNA with chromatin requires the presence of BAF and EMD. The chain is Emerin (EMD) from Homo sapiens (Human).